Reading from the N-terminus, the 99-residue chain is Large ribosomal subunit protein bL28 (99 aa).

It belongs to the bacterial ribosomal protein bL28 family.

The protein is Large ribosomal subunit protein bL28 of Rhodospirillum rubrum (strain ATCC 11170 / ATH 1.1.1 / DSM 467 / LMG 4362 / NCIMB 8255 / S1).